Reading from the N-terminus, the 579-residue chain is 2-succinyl-5-enolpyruvyl-6-hydroxy-3-cyclohexene-1-carboxylate synthase (579 aa).

This sequence belongs to the TPP enzyme family. MenD subfamily. As to quaternary structure, homodimer. Mg(2+) serves as cofactor. Requires Mn(2+) as cofactor. The cofactor is thiamine diphosphate.

The catalysed reaction is isochorismate + 2-oxoglutarate + H(+) = 5-enolpyruvoyl-6-hydroxy-2-succinyl-cyclohex-3-ene-1-carboxylate + CO2. The protein operates within quinol/quinone metabolism; 1,4-dihydroxy-2-naphthoate biosynthesis; 1,4-dihydroxy-2-naphthoate from chorismate: step 2/7. Its pathway is quinol/quinone metabolism; menaquinone biosynthesis. Functionally, catalyzes the thiamine diphosphate-dependent decarboxylation of 2-oxoglutarate and the subsequent addition of the resulting succinic semialdehyde-thiamine pyrophosphate anion to isochorismate to yield 2-succinyl-5-enolpyruvyl-6-hydroxy-3-cyclohexene-1-carboxylate (SEPHCHC). The protein is 2-succinyl-5-enolpyruvyl-6-hydroxy-3-cyclohexene-1-carboxylate synthase of Oceanobacillus iheyensis (strain DSM 14371 / CIP 107618 / JCM 11309 / KCTC 3954 / HTE831).